We begin with the raw amino-acid sequence, 62 residues long: uncharacterized protein (62 aa).

A helical transmembrane segment spans residues 17–37 (IVFFLGLVVVLLMMINLYMLI).

The protein resides in the membrane. This is an uncharacterized protein from Helicobacter pylori (strain J99 / ATCC 700824) (Campylobacter pylori J99).